The primary structure comprises 176 residues: Photosystem I assembly protein Ycf4 (176 aa).

The next 2 helical transmembrane spans lie at 22–42 (FLWAFILFFGSLEFILVGTAS) and 57–77 (VMTFYGISGLFISLYLLSMLF).

This sequence belongs to the Ycf4 family.

Its subcellular location is the plastid thylakoid membrane. Functionally, seems to be required for the assembly of the photosystem I complex. The chain is Photosystem I assembly protein Ycf4 from Cuscuta obtusiflora (Peruvian dodder).